The following is a 212-amino-acid chain: Nascent polypeptide-associated complex subunit alpha-like protein 4 (212 aa).

Over residues Gln25–Val35 the composition is skewed to basic and acidic residues. A disordered region spans residues Gln25–Ala74. Residues Lys36 to Ala53 are compositionally biased toward acidic residues. The 66-residue stretch at Ser65–Leu130 folds into the NAC-A/B domain. The UBA domain occupies Val173 to Leu210.

Belongs to the NAC-alpha family.

Functionally, may promote appropriate targeting of ribosome-nascent polypeptide complexes. This chain is Nascent polypeptide-associated complex subunit alpha-like protein 4, found in Arabidopsis thaliana (Mouse-ear cress).